A 122-amino-acid polypeptide reads, in one-letter code: Large ribosomal subunit protein uL14 (122 aa).

It belongs to the universal ribosomal protein uL14 family. In terms of assembly, part of the 50S ribosomal subunit. Forms a cluster with proteins L3 and L19. In the 70S ribosome, L14 and L19 interact and together make contacts with the 16S rRNA in bridges B5 and B8.

In terms of biological role, binds to 23S rRNA. Forms part of two intersubunit bridges in the 70S ribosome. In Maridesulfovibrio salexigens (strain ATCC 14822 / DSM 2638 / NCIMB 8403 / VKM B-1763) (Desulfovibrio salexigens), this protein is Large ribosomal subunit protein uL14.